A 299-amino-acid chain; its full sequence is Peroxisomal biogenesis factor 19 (299 aa).

The disordered stretch occupies residues 1-63 (MAAAEGDGGV…SPGDTAKDAL (63 aa)). The residue at position 2 (A2) is an N-acetylalanine. Positions 2–56 (AAAEGDGGVRAEADRELEELLESALDDFDKAKPSPAPPPTTTAPDASGPQKRSPG) are docking to the peroxisome membrane and binding to PEX3. Residues 2–91 (AAAEGDGGVR…QATAEFEKAM (90 aa)) form a necessary for PEX19 function on peroxisome biogenesis region. The span at 16 to 27 (RELEELLESALD) shows a compositional bias: acidic residues. 3 positions are modified to phosphoserine: S35, S54, and S66. T236 is modified (phosphothreonine). C296 is subject to Cysteine methyl ester. C296 carries S-farnesyl cysteine lipidation. Positions 297–299 (LIM) are cleaved as a propeptide — removed in mature form.

It belongs to the peroxin-19 family. As to quaternary structure, interacts with a broad range of peroxisomal membrane proteins, including PEX3, PEX10, PEX11A, PEX11B, PEX12, PEX13, PEX14 and PEX16, PXMP2/PMP22, PXMP4/PMP24, SLC25A17/PMP34, ABCD1/ALDP, ABCD2/ALDRP, and ABCD3/PMP70. Also interacts with the tumor suppressor CDKN2A/p19ARF.

The protein localises to the cytoplasm. Its subcellular location is the peroxisome membrane. Its function is as follows. Necessary for early peroxisomal biogenesis. Acts both as a cytosolic chaperone and as an import receptor for peroxisomal membrane proteins (PMPs). Binds and stabilizes newly synthesized PMPs in the cytoplasm by interacting with their hydrophobic membrane-spanning domains, and targets them to the peroxisome membrane by binding to the integral membrane protein PEX3. Excludes CDKN2A from the nucleus and prevents its interaction with MDM2, which results in active degradation of TP53. This Bos taurus (Bovine) protein is Peroxisomal biogenesis factor 19 (PEX19).